We begin with the raw amino-acid sequence, 370 residues long: Anhydro-N-acetylmuramic acid kinase (370 aa).

ATP is bound at residue 13–20 (GTSLDGVD).

This sequence belongs to the anhydro-N-acetylmuramic acid kinase family.

It carries out the reaction 1,6-anhydro-N-acetyl-beta-muramate + ATP + H2O = N-acetyl-D-muramate 6-phosphate + ADP + H(+). Its pathway is amino-sugar metabolism; 1,6-anhydro-N-acetylmuramate degradation. The protein operates within cell wall biogenesis; peptidoglycan recycling. Functionally, catalyzes the specific phosphorylation of 1,6-anhydro-N-acetylmuramic acid (anhMurNAc) with the simultaneous cleavage of the 1,6-anhydro ring, generating MurNAc-6-P. Is required for the utilization of anhMurNAc either imported from the medium or derived from its own cell wall murein, and thus plays a role in cell wall recycling. The sequence is that of Anhydro-N-acetylmuramic acid kinase from Vibrio cholerae serotype O1 (strain ATCC 39315 / El Tor Inaba N16961).